The primary structure comprises 459 residues: Putrescine aminotransferase (459 aa).

Pyridoxal 5'-phosphate-binding positions include 150–151 and Gln-274; that span reads GT. Lys-300 is modified (N6-(pyridoxal phosphate)lysine). Thr-332 provides a ligand contact to pyridoxal 5'-phosphate.

It belongs to the class-III pyridoxal-phosphate-dependent aminotransferase family. Putrescine aminotransferase subfamily. Pyridoxal 5'-phosphate is required as a cofactor.

The catalysed reaction is an alkane-alpha,omega-diamine + 2-oxoglutarate = an omega-aminoaldehyde + L-glutamate. It catalyses the reaction putrescine + 2-oxoglutarate = 1-pyrroline + L-glutamate + H2O. The enzyme catalyses cadaverine + 2-oxoglutarate = 5-aminopentanal + L-glutamate. The protein operates within amine and polyamine degradation; putrescine degradation; 4-aminobutanal from putrescine (transaminase route): step 1/1. In terms of biological role, catalyzes the aminotransferase reaction from putrescine to 2-oxoglutarate, leading to glutamate and 4-aminobutanal, which spontaneously cyclizes to form 1-pyrroline. This is the first step in one of two pathways for putrescine degradation, where putrescine is converted into 4-aminobutanoate (gamma-aminobutyrate or GABA) via 4-aminobutanal. Also functions as a cadaverine transaminase in a a L-lysine degradation pathway to succinate that proceeds via cadaverine, glutarate and L-2-hydroxyglutarate. This Shigella flexneri serotype 5b (strain 8401) protein is Putrescine aminotransferase.